Consider the following 93-residue polypeptide: C-C motif chemokine 17 (93 aa).

The N-terminal stretch at 1–23 is a signal peptide; that stretch reads MMSLQMLLLAALLLGTSLQHASA. Disulfide bonds link Cys33–Cys57 and Cys34–Cys73.

Belongs to the intercrine beta (chemokine CC) family.

It is found in the secreted. Chemokine, which displays chemotactic activity for T lymphocytes, preferentially Th2 cells, but not monocytes or granulocytes. Therefore plays an important role in a wide range of inflammatory and immunological processes. Acts by binding to CCR4 at T-cell surface. Mediates GM-CSF/CSF2-driven pain and inflammation. In the brain, required to maintain the typical, highly branched morphology of hippocampal microglia under homeostatic conditions. May be important for the appropriate adaptation of microglial morphology and synaptic plasticity to acute lipopolysaccharide (LPS)-induced neuroinflammation. Plays a role in wound healing, mainly by inducing fibroblast migration into the wound. This Rattus norvegicus (Rat) protein is C-C motif chemokine 17 (Ccl17).